We begin with the raw amino-acid sequence, 147 residues long: 3-dehydroquinate dehydratase (147 aa).

Catalysis depends on Tyr-23, which acts as the Proton acceptor. Substrate is bound by residues Asn-74, His-80, and Asp-87. The active-site Proton donor is the His-100. Residues 101–102 and Arg-111 each bind substrate; that span reads LS.

Belongs to the type-II 3-dehydroquinase family. In terms of assembly, homododecamer.

The catalysed reaction is 3-dehydroquinate = 3-dehydroshikimate + H2O. It functions in the pathway metabolic intermediate biosynthesis; chorismate biosynthesis; chorismate from D-erythrose 4-phosphate and phosphoenolpyruvate: step 3/7. In terms of biological role, catalyzes a trans-dehydration via an enolate intermediate. The polypeptide is 3-dehydroquinate dehydratase (Glaesserella parasuis serovar 5 (strain SH0165) (Haemophilus parasuis)).